We begin with the raw amino-acid sequence, 363 residues long: 3,4-dihydroxy-2-butanone 4-phosphate synthase (363 aa).

The DHBP synthase stretch occupies residues 1-202; it reads MSHISPIPEI…IADLIEYRSR (202 aa). Residues 28 to 29, Asp33, 141 to 145, and Glu165 each bind D-ribulose 5-phosphate; these read RE and RAGHT. Glu29 contacts Mg(2+). His144 provides a ligand contact to Mg(2+). Residues 205 to 363 are GTP cyclohydrolase II-like; it reads SLLEDMGNAP…EVVGFEEAEK (159 aa).

This sequence in the N-terminal section; belongs to the DHBP synthase family. The protein in the C-terminal section; belongs to the GTP cyclohydrolase II family. Requires Mg(2+) as cofactor. Mn(2+) serves as cofactor.

It catalyses the reaction D-ribulose 5-phosphate = (2S)-2-hydroxy-3-oxobutyl phosphate + formate + H(+). The protein operates within cofactor biosynthesis; riboflavin biosynthesis; 2-hydroxy-3-oxobutyl phosphate from D-ribulose 5-phosphate: step 1/1. In terms of biological role, catalyzes the conversion of D-ribulose 5-phosphate to formate and 3,4-dihydroxy-2-butanone 4-phosphate. The sequence is that of 3,4-dihydroxy-2-butanone 4-phosphate synthase (ribB) from Neisseria meningitidis serogroup B (strain ATCC BAA-335 / MC58).